The chain runs to 225 residues: UPF0173 metal-dependent hydrolase Fjoh_2786 (225 aa).

The protein belongs to the UPF0173 family.

In Flavobacterium johnsoniae (strain ATCC 17061 / DSM 2064 / JCM 8514 / BCRC 14874 / CCUG 350202 / NBRC 14942 / NCIMB 11054 / UW101) (Cytophaga johnsonae), this protein is UPF0173 metal-dependent hydrolase Fjoh_2786.